The chain runs to 328 residues: Ribose-phosphate pyrophosphokinase (328 aa).

ATP contacts are provided by residues 39–41 (DGE) and 98–99 (RQ). Histidine 132 and aspartate 172 together coordinate Mg(2+). Lysine 195 is an active-site residue. D-ribose 5-phosphate-binding positions include arginine 197, aspartate 221, and 225 to 229 (DTGGT).

The protein belongs to the ribose-phosphate pyrophosphokinase family. Class I subfamily. Homohexamer. The cofactor is Mg(2+).

Its subcellular location is the cytoplasm. The catalysed reaction is D-ribose 5-phosphate + ATP = 5-phospho-alpha-D-ribose 1-diphosphate + AMP + H(+). It functions in the pathway metabolic intermediate biosynthesis; 5-phospho-alpha-D-ribose 1-diphosphate biosynthesis; 5-phospho-alpha-D-ribose 1-diphosphate from D-ribose 5-phosphate (route I): step 1/1. Functionally, involved in the biosynthesis of the central metabolite phospho-alpha-D-ribosyl-1-pyrophosphate (PRPP) via the transfer of pyrophosphoryl group from ATP to 1-hydroxyl of ribose-5-phosphate (Rib-5-P). This is Ribose-phosphate pyrophosphokinase from Mycoplasma pneumoniae (strain ATCC 29342 / M129 / Subtype 1) (Mycoplasmoides pneumoniae).